The sequence spans 475 residues: Ribulose bisphosphate carboxylase large chain (475 aa).

The propeptide occupies methionine 1–serine 2. N-acetylproline is present on proline 3. Lysine 14 bears the N6,N6,N6-trimethyllysine mark. Residue lysine 175 is the Proton acceptor of the active site. 2 residues coordinate D-ribulose 1,5-bisphosphate: lysine 175 and lysine 177. Residues lysine 201, aspartate 203, and glutamate 204 each contribute to the Mg(2+) site. Lysine 201 bears the N6-carboxylysine mark. Glutamate 204 contacts D-ribulose 1,5-bisphosphate. The Proton acceptor role is filled by histidine 294. D-ribulose 1,5-bisphosphate contacts are provided by arginine 295, histidine 327, lysine 334, serine 379, glycine 381, glycine 403, and glycine 404.

It belongs to the RuBisCO large chain family. Type I subfamily. As to quaternary structure, heterohexadecamer of 8 large chains and 8 small chains. Heterohexadecamer; disulfide-linked. The disulfide link is formed within the large subunit homodimers. Mg(2+) is required as a cofactor. The disulfide bond which can form in the large chain dimeric partners within the hexadecamer appears to be associated with oxidative stress and protein turnover.

The protein localises to the plastid. Its subcellular location is the chloroplast. The enzyme catalyses 2 (2R)-3-phosphoglycerate + 2 H(+) = D-ribulose 1,5-bisphosphate + CO2 + H2O. The catalysed reaction is D-ribulose 1,5-bisphosphate + O2 = 2-phosphoglycolate + (2R)-3-phosphoglycerate + 2 H(+). In terms of biological role, ruBisCO catalyzes two reactions: the carboxylation of D-ribulose 1,5-bisphosphate, the primary event in carbon dioxide fixation, as well as the oxidative fragmentation of the pentose substrate in the photorespiration process. Both reactions occur simultaneously and in competition at the same active site. Binds to abscisic acid (ABA); only half of the possible binding sites are occupied in the crystal and there are indications this is a low affinity site. In Pisum sativum (Garden pea), this protein is Ribulose bisphosphate carboxylase large chain.